Here is a 440-residue protein sequence, read N- to C-terminus: tRNA-2-methylthio-N(6)-dimethylallyladenosine synthase (440 aa).

The 119-residue stretch at 4–122 (KSYYIITHGC…LPKILERVFE (119 aa)) folds into the MTTase N-terminal domain. [4Fe-4S] cluster is bound by residues Cys13, Cys49, Cys83, Cys159, Cys163, and Cys166. The Radical SAM core domain occupies 145 to 375 (REPGVRAWVT…IELQNGISLE (231 aa)). In terms of domain architecture, TRAM spans 378–440 (KNEEGNIHEI…KLFHLEGVLV (63 aa)).

This sequence belongs to the methylthiotransferase family. MiaB subfamily. Monomer. Requires [4Fe-4S] cluster as cofactor.

It is found in the cytoplasm. The enzyme catalyses N(6)-dimethylallyladenosine(37) in tRNA + (sulfur carrier)-SH + AH2 + 2 S-adenosyl-L-methionine = 2-methylsulfanyl-N(6)-dimethylallyladenosine(37) in tRNA + (sulfur carrier)-H + 5'-deoxyadenosine + L-methionine + A + S-adenosyl-L-homocysteine + 2 H(+). Functionally, catalyzes the methylthiolation of N6-(dimethylallyl)adenosine (i(6)A), leading to the formation of 2-methylthio-N6-(dimethylallyl)adenosine (ms(2)i(6)A) at position 37 in tRNAs that read codons beginning with uridine. This Carboxydothermus hydrogenoformans (strain ATCC BAA-161 / DSM 6008 / Z-2901) protein is tRNA-2-methylthio-N(6)-dimethylallyladenosine synthase.